The sequence spans 275 residues: Putative phosphoenolpyruvate synthase regulatory protein (275 aa).

157–164 (GVSRCGKT) is an ADP binding site.

Belongs to the pyruvate, phosphate/water dikinase regulatory protein family. PSRP subfamily.

The enzyme catalyses [pyruvate, water dikinase] + ADP = [pyruvate, water dikinase]-phosphate + AMP + H(+). It catalyses the reaction [pyruvate, water dikinase]-phosphate + phosphate + H(+) = [pyruvate, water dikinase] + diphosphate. Its function is as follows. Bifunctional serine/threonine kinase and phosphorylase involved in the regulation of the phosphoenolpyruvate synthase (PEPS) by catalyzing its phosphorylation/dephosphorylation. The polypeptide is Putative phosphoenolpyruvate synthase regulatory protein (Bordetella bronchiseptica (strain ATCC BAA-588 / NCTC 13252 / RB50) (Alcaligenes bronchisepticus)).